We begin with the raw amino-acid sequence, 286 residues long: MQNKIDHKNIKTIGLVTRPNVSLDKEILKLQSILSIYKVELVLFKESSEILDLPKYGLDDLFKISDFVISLGGDGTLISLCRKACEYDKAVLGIHAGHLGFLTDFKVDEAENFFQAFFQGEFRIEKPYLLSVFLEDKQGKILEKLAFNDVVISKNNQASMAHIEVFRKEKKFNEYFGDGLIVATPAGSTAYNLSANGPIVYTLAQAFILTPVCSHSLTQRPIVLPKGFEIEIMAKDCILCIDGQENYKMNDFKSIKVGLSDKNVALIHPKNRDYFQILKEKLHWGN.

Asp-74 (proton acceptor) is an active-site residue. NAD(+) contacts are provided by residues 74 to 75 (DG), 148 to 149 (ND), Asp-178, Ala-186, 189 to 194 (TAYNLS), and Gln-244.

The protein belongs to the NAD kinase family. The cofactor is a divalent metal cation.

Its subcellular location is the cytoplasm. It catalyses the reaction NAD(+) + ATP = ADP + NADP(+) + H(+). In terms of biological role, involved in the regulation of the intracellular balance of NAD and NADP, and is a key enzyme in the biosynthesis of NADP. Catalyzes specifically the phosphorylation on 2'-hydroxyl of the adenosine moiety of NAD to yield NADP. This Campylobacter jejuni subsp. jejuni serotype O:23/36 (strain 81-176) protein is NAD kinase.